A 238-amino-acid chain; its full sequence is uncharacterized protein (238 aa).

The HTH gntR-type domain occupies Met-1–Lys-68. Positions Glu-28–Asp-47 form a DNA-binding region, H-T-H motif.

This is an uncharacterized protein from Escherichia coli (strain K12).